The primary structure comprises 112 residues: Protein FAM32A (112 aa).

The interval 23–58 (TKRKKKKKDKDKAKLLEAMGTSKKNEEEKRRGLDKR) is disordered. The span at 45–58 (KKNEEEKRRGLDKR) shows a compositional bias: basic and acidic residues.

This sequence belongs to the FAM32 family.

The protein resides in the nucleus. May induce G2 arrest and apoptosis. May also increase cell sensitivity to apoptotic stimuli. This is Protein FAM32A (FAM32A) from Bos taurus (Bovine).